Reading from the N-terminus, the 152-residue chain is Large ribosomal subunit protein bL9 (152 aa).

This sequence belongs to the bacterial ribosomal protein bL9 family.

Binds to the 23S rRNA. The protein is Large ribosomal subunit protein bL9 of Picosynechococcus sp. (strain ATCC 27264 / PCC 7002 / PR-6) (Agmenellum quadruplicatum).